Here is a 151-residue protein sequence, read N- to C-terminus: Small ribosomal subunit protein uS15 (151 aa).

The tract at residues 1-20 is disordered; the sequence is MARLHSGKRGSSGSTRPLRT.

The protein belongs to the universal ribosomal protein uS15 family. As to quaternary structure, part of the 30S ribosomal subunit.

This Methanococcus maripaludis (strain C7 / ATCC BAA-1331) protein is Small ribosomal subunit protein uS15.